Consider the following 796-residue polypeptide: Lon protease 2 (796 aa).

Residues 9-206 form the Lon N-terminal domain; the sequence is LPIVILKENV…KLIVNLSIEI (198 aa). Position 352-359 (352-359) interacts with ATP; the sequence is GPPGIGKT. Residues 617 to 796 form the Lon proteolytic domain; that stretch reads IDSSGFVYGL…EEVFDYLNII (180 aa). Active-site residues include S702 and K745.

The protein belongs to the peptidase S16 family. Homohexamer. Organized in a ring with a central cavity.

Its subcellular location is the cytoplasm. It catalyses the reaction Hydrolysis of proteins in presence of ATP.. ATP-dependent serine protease that mediates the selective degradation of mutant and abnormal proteins as well as certain short-lived regulatory proteins. Required for cellular homeostasis and for survival from DNA damage and developmental changes induced by stress. Degrades polypeptides processively to yield small peptide fragments that are 5 to 10 amino acids long. Binds to DNA in a double-stranded, site-specific manner. This Borreliella burgdorferi (strain ATCC 35210 / DSM 4680 / CIP 102532 / B31) (Borrelia burgdorferi) protein is Lon protease 2 (lon2).